Here is a 577-residue protein sequence, read N- to C-terminus: Phosphoethanolamine transferase CptA (577 aa).

Helical transmembrane passes span 17–37 (LGWA…IIYL), 45–65 (GLRD…LFPG), 69–89 (VIAA…LSYY), 119–139 (YFSL…ILLW), and 154–174 (LVSF…NTFI).

This sequence belongs to the phosphoethanolamine transferase family. EptC/CptA subfamily.

Its subcellular location is the cell inner membrane. It functions in the pathway bacterial outer membrane biogenesis; LPS core biosynthesis. Functionally, catalyzes the addition of a phosphoethanolamine moiety to the outer membrane lipopolysaccharide core. The sequence is that of Phosphoethanolamine transferase CptA (cptA) from Salmonella typhimurium (strain LT2 / SGSC1412 / ATCC 700720).